A 219-amino-acid chain; its full sequence is Proteasome subunit beta (219 aa).

A propeptide spans 1-14 (MISNSEYHKEYMKG) (removed in mature form; by autocatalysis). Residue T15 is the Nucleophile of the active site.

The protein belongs to the peptidase T1B family. In terms of assembly, the 20S proteasome core is composed of 14 alpha and 14 beta subunits that assemble into four stacked heptameric rings, resulting in a barrel-shaped structure. The two inner rings, each composed of seven catalytic beta subunits, are sandwiched by two outer rings, each composed of seven alpha subunits. The catalytic chamber with the active sites is on the inside of the barrel. Has a gated structure, the ends of the cylinder being occluded by the N-termini of the alpha-subunits. Is capped at one or both ends by the proteasome regulatory ATPase, PAN.

The protein resides in the cytoplasm. It carries out the reaction Cleavage of peptide bonds with very broad specificity.. The formation of the proteasomal ATPase PAN-20S proteasome complex, via the docking of the C-termini of PAN into the intersubunit pockets in the alpha-rings, triggers opening of the gate for substrate entry. Interconversion between the open-gate and close-gate conformations leads to a dynamic regulation of the 20S proteasome proteolysis activity. Functionally, component of the proteasome core, a large protease complex with broad specificity involved in protein degradation. The sequence is that of Proteasome subunit beta from Methanococcus maripaludis (strain C6 / ATCC BAA-1332).